Reading from the N-terminus, the 177-residue chain is MIDHSSARDAVTRLTRWADDFPQPGVRFADLTPVFSDADGFRVVVDALAACAPEADVIAAVDARGFLLGGGVARELGSGVVAVRKSGKLPPPVLSQSYTLEYGTATLEIPAGSIGLDGRSVLVVDDVLATGGTLDATARLVESAGARVIGVAVVLEIAALGGRERLGKYPLTSLVTV.

The protein belongs to the purine/pyrimidine phosphoribosyltransferase family. As to quaternary structure, homodimer.

Its subcellular location is the cytoplasm. It catalyses the reaction AMP + diphosphate = 5-phospho-alpha-D-ribose 1-diphosphate + adenine. Its pathway is purine metabolism; AMP biosynthesis via salvage pathway; AMP from adenine: step 1/1. Catalyzes a salvage reaction resulting in the formation of AMP, that is energically less costly than de novo synthesis. This is Adenine phosphoribosyltransferase from Rhodococcus jostii (strain RHA1).